Consider the following 674-residue polypeptide: Probable 3',5'-cyclic-AMP phosphodiesterase pde-4 (674 aa).

The segment at M1–P82 is disordered. Gly residues predominate over residues G15–G24. Positions R39 to A62 are enriched in low complexity. Positions P66–S78 are enriched in polar residues. One can recognise a PDEase domain in the interval H328 to E660. The Proton donor role is filled by H407. Positions 411, 447, 448, and 565 each coordinate a divalent metal cation.

This sequence belongs to the cyclic nucleotide phosphodiesterase family. A divalent metal cation serves as cofactor. As to expression, expressed in dorsal D (DD) motor neurons and several other neurons at the L1 stage. Expression in DD neurons decreases gradually beginning in the late L1 stage. Highly expressed in adult ventral D (VD) motor neurons, but diminished in adult DD motor neurons.

The enzyme catalyses 3',5'-cyclic AMP + H2O = AMP + H(+). Hydrolyzes the second messenger 3',5'-cyclic AMP (cAMP), which is a key regulator of many important physiological processes. Antagonizes dorsal D (DD) motor neuron respecification by reducing levels of cAMP. The sequence is that of Probable 3',5'-cyclic-AMP phosphodiesterase pde-4 (pde-4) from Caenorhabditis elegans.